The chain runs to 172 residues: Adenine phosphoribosyltransferase (172 aa).

Belongs to the purine/pyrimidine phosphoribosyltransferase family. As to quaternary structure, homodimer.

Its subcellular location is the cytoplasm. The enzyme catalyses AMP + diphosphate = 5-phospho-alpha-D-ribose 1-diphosphate + adenine. It functions in the pathway purine metabolism; AMP biosynthesis via salvage pathway; AMP from adenine: step 1/1. In terms of biological role, catalyzes a salvage reaction resulting in the formation of AMP, that is energically less costly than de novo synthesis. This Hydrogenovibrio crunogenus (strain DSM 25203 / XCL-2) (Thiomicrospira crunogena) protein is Adenine phosphoribosyltransferase.